A 434-amino-acid chain; its full sequence is Enolase (434 aa).

A (2R)-2-phosphoglycerate-binding site is contributed by glutamine 165. Glutamate 207 (proton donor) is an active-site residue. Aspartate 244, glutamate 291, and aspartate 318 together coordinate Mg(2+). Lysine 343, arginine 372, serine 373, and lysine 394 together coordinate (2R)-2-phosphoglycerate. Lysine 343 serves as the catalytic Proton acceptor.

This sequence belongs to the enolase family. Requires Mg(2+) as cofactor.

It localises to the cytoplasm. The protein localises to the secreted. Its subcellular location is the cell surface. It catalyses the reaction (2R)-2-phosphoglycerate = phosphoenolpyruvate + H2O. The protein operates within carbohydrate degradation; glycolysis; pyruvate from D-glyceraldehyde 3-phosphate: step 4/5. Catalyzes the reversible conversion of 2-phosphoglycerate (2-PG) into phosphoenolpyruvate (PEP). It is essential for the degradation of carbohydrates via glycolysis. The polypeptide is Enolase (Staphylococcus saprophyticus subsp. saprophyticus (strain ATCC 15305 / DSM 20229 / NCIMB 8711 / NCTC 7292 / S-41)).